The primary structure comprises 31 residues: Cytochrome b6-f complex subunit 6 (31 aa).

The chain crosses the membrane as a helical span at residues 3-23; the sequence is TLTSYFGFLLVALTITLVLFI.

This sequence belongs to the PetL family. As to quaternary structure, the 4 large subunits of the cytochrome b6-f complex are cytochrome b6, subunit IV (17 kDa polypeptide, PetD), cytochrome f and the Rieske protein, while the 4 small subunits are PetG, PetL, PetM and PetN. The complex functions as a dimer.

Its subcellular location is the plastid. It localises to the chloroplast thylakoid membrane. In terms of biological role, component of the cytochrome b6-f complex, which mediates electron transfer between photosystem II (PSII) and photosystem I (PSI), cyclic electron flow around PSI, and state transitions. PetL is important for photoautotrophic growth as well as for electron transfer efficiency and stability of the cytochrome b6-f complex. This chain is Cytochrome b6-f complex subunit 6, found in Populus alba (White poplar).